We begin with the raw amino-acid sequence, 414 residues long: Alanine--glyoxylate aminotransferase (414 aa).

The N-terminal 23 residues, 1–23 (MFRALARASATLGPQVAGWARTM), are a transit peptide targeting the mitochondrion. Position 231 is an N6-(pyridoxal phosphate)lysine (Lys231). Lys247 bears the N6-acetyllysine; alternate mark. The residue at position 247 (Lys247) is an N6-succinyllysine; alternate. 2 positions are modified to N6-acetyllysine: Lys256 and Lys334. Arg382 provides a ligand contact to substrate. The Microbody targeting signal signature appears at 412-414 (NKL).

The protein belongs to the class-V pyridoxal-phosphate-dependent aminotransferase family. As to quaternary structure, homodimer. The cofactor is pyridoxal 5'-phosphate.

It is found in the peroxisome. It localises to the mitochondrion matrix. The catalysed reaction is L-serine + pyruvate = 3-hydroxypyruvate + L-alanine. It catalyses the reaction glyoxylate + L-alanine = glycine + pyruvate. Catalyzes the transamination of glyoxylate to glycine and contributes to the glyoxylate detoxification. In terms of biological role, catalyzes the transamination between L-serine and pyruvate and contributes to gluconeogenesis from the L-serine metabolism. The protein is Alanine--glyoxylate aminotransferase of Felis catus (Cat).